A 477-amino-acid polypeptide reads, in one-letter code: ATP synthase subunit beta (477 aa).

155–162 is an ATP binding site; it reads GGAGVGKT.

This sequence belongs to the ATPase alpha/beta chains family. F-type ATPases have 2 components, CF(1) - the catalytic core - and CF(0) - the membrane proton channel. CF(1) has five subunits: alpha(3), beta(3), gamma(1), delta(1), epsilon(1). CF(0) has three main subunits: a(1), b(2) and c(9-12). The alpha and beta chains form an alternating ring which encloses part of the gamma chain. CF(1) is attached to CF(0) by a central stalk formed by the gamma and epsilon chains, while a peripheral stalk is formed by the delta and b chains.

It is found in the cell inner membrane. It carries out the reaction ATP + H2O + 4 H(+)(in) = ADP + phosphate + 5 H(+)(out). Produces ATP from ADP in the presence of a proton gradient across the membrane. The catalytic sites are hosted primarily by the beta subunits. This Mesorhizobium japonicum (strain LMG 29417 / CECT 9101 / MAFF 303099) (Mesorhizobium loti (strain MAFF 303099)) protein is ATP synthase subunit beta.